A 290-amino-acid polypeptide reads, in one-letter code: Phosphoribulokinase (290 aa).

12 to 20 (GSSGAGTTS) serves as a coordination point for ATP.

Belongs to the phosphoribulokinase family.

It carries out the reaction D-ribulose 5-phosphate + ATP = D-ribulose 1,5-bisphosphate + ADP + H(+). The protein operates within carbohydrate biosynthesis; Calvin cycle. This chain is Phosphoribulokinase (cbbP), found in Nitrobacter vulgaris.